A 333-amino-acid chain; its full sequence is tRNA N6-adenosine threonylcarbamoyltransferase (333 aa).

Positions 108 and 112 each coordinate Fe cation. Residues 129–133 (LVSGG), aspartate 161, glutamate 178, and serine 258 contribute to the substrate site. Aspartate 286 provides a ligand contact to Fe cation.

It belongs to the KAE1 / TsaD family. Fe(2+) serves as cofactor.

The protein resides in the cytoplasm. The catalysed reaction is L-threonylcarbamoyladenylate + adenosine(37) in tRNA = N(6)-L-threonylcarbamoyladenosine(37) in tRNA + AMP + H(+). In terms of biological role, required for the formation of a threonylcarbamoyl group on adenosine at position 37 (t(6)A37) in tRNAs that read codons beginning with adenine. Is probably involved in the transfer of the threonylcarbamoyl moiety of threonylcarbamoyl-AMP (TC-AMP) to the N6 group of A37. The sequence is that of tRNA N6-adenosine threonylcarbamoyltransferase from Pyrobaculum islandicum (strain DSM 4184 / JCM 9189 / GEO3).